A 613-amino-acid polypeptide reads, in one-letter code: tRNA (uracil-5-)-methyltransferase homolog A (613 aa).

Residues 1-46 (MSEPAAEVPEPMEDCGQDASAVPSSAAPLCQKEEAGPGPAAGPGTQ) form a disordered region. Residues 63-136 (FKLELQNVPR…CPLSVRLARP (74 aa)) form the RRM domain. Residues 170–200 (YTEQLEQKRLECERVLQKLAKEIGNTNRALL) are a coiled coil. At Ser368 the chain carries Phosphoserine. Residues Gln401, Glu451, and Asp500 each contribute to the S-adenosyl-L-methionine site. Cys528 (nucleophile) is an active-site residue. Glu571 (proton acceptor) is an active-site residue.

Belongs to the class I-like SAM-binding methyltransferase superfamily. RNA M5U methyltransferase family. As to expression, widely expressed at low level. Expressed at higher level in proliferating cells.

Its subcellular location is the cytoplasm. It is found in the cytosol. It carries out the reaction uridine(54) in tRNA + S-adenosyl-L-methionine = 5-methyluridine(54) in tRNA + S-adenosyl-L-homocysteine + H(+). The catalysed reaction is a uridine in mRNA + S-adenosyl-L-methionine = a 5-methyluridine in mRNA + S-adenosyl-L-homocysteine + H(+). Functionally, S-adenosyl-L-methionine-dependent methyltransferase that catalyzes the formation of 5-methyl-uridine in tRNAs and some mRNAs. Mainly catalyzes the methylation of uridine at position 54 (m5U54) in cytosolic tRNAs. Also able to mediate the formation of 5-methyl-uridine in some mRNAs. The polypeptide is tRNA (uracil-5-)-methyltransferase homolog A (Mus musculus (Mouse)).